We begin with the raw amino-acid sequence, 58 residues long: Small ribosomal subunit protein bS21 (58 aa).

It belongs to the bacterial ribosomal protein bS21 family.

This is Small ribosomal subunit protein bS21 from Synechococcus sp. (strain CC9605).